The chain runs to 772 residues: Metal transporter CNNM4 (772 aa).

At 1–175 (MAPGGGGGRR…SLLFMVEEHG (175 aa)) the chain is on the extracellular side. Residue Asn-120 is glycosylated (N-linked (GlcNAc...) asparagine). The chain crosses the membrane as a helical span at residues 176–196 (RFLPLWLHILLVLVLLVLSGI). Residues 176–356 (RFLPLWLHIL…EPYNDLVKEE (181 aa)) enclose the CNNM transmembrane domain. At 197–237 (FSGLNLGLMALDPMELRIVQNCGTEKERRYARKIEPIRRKG) the chain is on the cytoplasmic side. The segment at residues 238 to 258 (NYLLCSLLLGNVLVNTSLTIL) is an intramembrane region (helical). The Cytoplasmic segment spans residues 259-261 (LDN). The chain crosses the membrane as a helical span at residues 262–282 (LIGSGIMAVASSTIGIVIFGE). At 283-290 (ILPQALCS) the chain is on the extracellular side. The helical transmembrane segment at 291–313 (RHGLAVGANTIVLTKIFMLLTFP) threads the bilayer. The Cytoplasmic portion of the chain corresponds to 314–772 (LSFPISKLLD…LHRASQEGTI (459 aa)). CBS domains lie at 375 to 436 (MTQL…CTPL) and 443 to 509 (YNHP…ILDE). Residues 647–676 (PDRSPAHPTPLSRSASLSYPDRNTDMTPSS) are disordered. 3 positions are modified to phosphoserine: Ser-658, Ser-662, and Ser-767.

It belongs to the ACDP family. Interacts with COX11. In terms of tissue distribution, present in spinal cord dorsal horn neurons and in developing teeth (at protein level). In the tooth, higher expression is found in the ameloblasts during the transition and maturation phases of amelogenesis; reduced expression in the odontoblasts.

The protein resides in the cell membrane. Its function is as follows. Probable metal transporter. The interaction with the metal ion chaperone COX11 suggests that it may play a role in sensory neuron functions. May play a role in biomineralization and retinal function. In Rattus norvegicus (Rat), this protein is Metal transporter CNNM4 (Cnnm4).